A 321-amino-acid polypeptide reads, in one-letter code: Glucokinase (321 aa).

8–13 provides a ligand contact to ATP; sequence GDVGGT.

It belongs to the bacterial glucokinase family.

Its subcellular location is the cytoplasm. The catalysed reaction is D-glucose + ATP = D-glucose 6-phosphate + ADP + H(+). Not highly important in E.coli as glucose is transported into the cell by the PTS system already as glucose 6-phosphate. The protein is Glucokinase of Escherichia coli O139:H28 (strain E24377A / ETEC).